A 318-amino-acid polypeptide reads, in one-letter code: Homoserine kinase (318 aa).

97-107 (PIGSGLGSSAC) is a binding site for ATP.

This sequence belongs to the GHMP kinase family. Homoserine kinase subfamily.

It is found in the cytoplasm. The catalysed reaction is L-homoserine + ATP = O-phospho-L-homoserine + ADP + H(+). Its pathway is amino-acid biosynthesis; L-threonine biosynthesis; L-threonine from L-aspartate: step 4/5. Catalyzes the ATP-dependent phosphorylation of L-homoserine to L-homoserine phosphate. The polypeptide is Homoserine kinase (Aliivibrio fischeri (strain MJ11) (Vibrio fischeri)).